The sequence spans 1413 residues: Alpha-latrocrustotoxin-Lt1a (1413 aa).

The propeptide occupies 1 to 28 (VSIFIFHFSANILVRNSEMKGKRVISKR). Positions 238–257 (ALFALFYGTQTFISIMFYLV) are helix H8 is the probable transmembrane region of the tetrameric pore inserted in the target cell membrane. ANK repeat units lie at residues 457–490 (DIHR…QVGA), 494–524 (MGRK…LLNV), 528–557 (NGYT…DVNV), 562–592 (NELT…DVNA), 596–625 (AGFT…GINI), 629–658 (SGLT…KVKL), 664–694 (NGMT…DVNA), 699–729 (KNWT…DIST), 733–762 (QAIT…VVDQ), 766–795 (NGFT…NINA), 799–828 (DGST…NIKA), 832–861 (INQM…SLMN), 866–895 (RDEY…DVNE), 899–928 (DGNT…DFRL), 965–995 (RGKT…TLNE), 996–1026 (DQCS…NPTA), 1031–1072 (NQVS…DINK), 1077–1106 (QQST…DPNK), 1109–1139 (RGDP…DVNT), and 1143–1172 (EQFT…DVNA). A propeptide spanning residues 1193–1413 (RSLGRRFFRN…NRPTNVLQIK (221 aa)) is cleaved from the precursor.

This sequence belongs to the cationic peptide 01 (latrotoxin) family. 01 (alpha-latrocrustotoxin) subfamily. In terms of assembly, homotetramer in membranes. As to expression, expressed by the venom gland.

It is found in the secreted. The protein resides in the target cell membrane. Functionally, crustacean-selective presynaptic neurotoxin that induces neurotransmitter exocytosis. May bind to crustacean neurexin-1 homolog, adhesion G protein-coupled receptor L1 homolog, and receptor-type tyrosine-protein phosphatase S homolog, and induces neurotransmitter exocytosis both by forming tetrameric pores in membranes and signaling via G protein-coupled receptor. This recombinant protein form channels in artificial membrane bilayers, that are stabilized by calcium ions and allow calcium flux at negative membrane potentials. The chain is Alpha-latrocrustotoxin-Lt1a from Latrodectus tredecimguttatus (Mediterranean black widow spider).